Reading from the N-terminus, the 247-residue chain is Phycobilisome rod-core linker polypeptide CpcG2 (247 aa).

Residues 11–189 form the PBS-linker domain; it reads SSQNQRVPGY…YWRDKLESER (179 aa). The interval 223 to 247 is disordered; the sequence is PDTTRNTTPTGIPISVNPSANFPVR.

The protein belongs to the phycobilisome linker protein family. Part of the phycobilisome, a hemidiscoidal structure that is composed of two distinct substructures: a core complex and a number of rods radiating from the core.

The protein resides in the cellular thylakoid membrane. In terms of biological role, rod-core linker protein required for attachment of phycocyanin to allophycocyanin in cores of phycobilisomes. Linker polypeptides determine the state of aggregation and the location of the disk-shaped phycobiliprotein units within the phycobilisome and modulate their spectroscopic properties in order to mediate a directed and optimal energy transfer. This is Phycobilisome rod-core linker polypeptide CpcG2 from Nostoc sp. (strain PCC 7120 / SAG 25.82 / UTEX 2576).